Here is a 706-residue protein sequence, read N- to C-terminus: uncharacterized protein (706 aa).

3 coiled-coil regions span residues 86-162 (TKNV…AKKI), 269-299 (DYLKDVEKSIEQLSDNYEQYLSNIDIFVNEL), and 337-427 (DDYI…QSDY).

This is an uncharacterized protein from Staphylococcus aureus (strain MRSA252).